The following is a 242-amino-acid chain: MDKVFELKNVSYFYTPKVPALIDISFDVKLKEKLFILGANGSGKSTLLKLMDGLIYPHEGQIRFFGKVIGDKRTFDEYEFRRRVGFVFQDSDVQLFNTTVFDEIAFAPLQMGVKKEEVEKLVNEILISFGIEKLKDRPPHRLSGGEKKKVALASIIVINPDVLLLDEPTNGLDPRSKKWLLSKLEELNQKGATLVIATHDLEMAKKFSDRIIILNEEHKIETIGSPEEILNDEKLLLKANLI.

The 238-residue stretch at 5 to 242 folds into the ABC transporter domain; the sequence is FELKNVSYFY…EKLLLKANLI (238 aa). 38 to 45 lines the ATP pocket; that stretch reads GANGSGKS.

Belongs to the ABC transporter superfamily.

It localises to the cell membrane. Functionally, probably part of an ABC transporter complex. Responsible for energy coupling to the transport system. The chain is Putative ABC transporter ATP-binding protein TTE0246 from Caldanaerobacter subterraneus subsp. tengcongensis (strain DSM 15242 / JCM 11007 / NBRC 100824 / MB4) (Thermoanaerobacter tengcongensis).